Consider the following 409-residue polypeptide: Tyrosine--tRNA ligase (409 aa).

The 'HIGH' region motif lies at 54 to 63 (PTAPDIHLGH). A 'KMSKS' region motif is present at residues 238-242 (KMSKS). Residue lysine 241 coordinates ATP. The 61-residue stretch at 347–407 (QGILRILREA…GKRKFARVKL (61 aa)) folds into the S4 RNA-binding domain.

This sequence belongs to the class-I aminoacyl-tRNA synthetase family. TyrS type 2 subfamily. Homodimer.

It localises to the cytoplasm. The catalysed reaction is tRNA(Tyr) + L-tyrosine + ATP = L-tyrosyl-tRNA(Tyr) + AMP + diphosphate + H(+). In terms of biological role, catalyzes the attachment of tyrosine to tRNA(Tyr) in a two-step reaction: tyrosine is first activated by ATP to form Tyr-AMP and then transferred to the acceptor end of tRNA(Tyr). In Bordetella parapertussis (strain 12822 / ATCC BAA-587 / NCTC 13253), this protein is Tyrosine--tRNA ligase.